Consider the following 568-residue polypeptide: Protein phosphatase 1 regulatory inhibitor subunit 16B (568 aa).

Positions 15–55 (EKVPTLERLRAAQKRRAQQLKKWAQYEQDLQHRKRKHERKR) form a coiled coil. The residue at position 69 (S69) is a Phosphoserine. ANK repeat units follow at residues 100–129 (DGLTALHQCCIDNFEEIVKLLLSHGANVNA), 133–162 (ELWTPLHAAATCGHINLVKILVQYGADLLA), 228–257 (QGATLLHIAGANGYLRAAELLLDHGVRVDV), and 261–290 (DGWEPLHAAAFWGQMQMAELLVSHGASLSA). The tract at residues 327–346 (RHKSSLSRRTSSAGSRGKVV) is disordered. S333, S337, and S350 each carry phosphoserine. A compositionally biased stretch (low complexity) spans 333–342 (SRRTSSAGSR). Positions 373–404 (SASEDQRNSTYNGDIRETRTDQENKDPNPRLE) are disordered. The segment covering 386-404 (DIRETRTDQENKDPNPRLE) has biased composition (basic and acidic residues). Phosphoserine is present on S477. The interval 504-525 (GSGVSRTGEGSSEGKAPLIGGR) is disordered. An ANK 5 repeat occupies 531–560 (SNGTSVYYTVTSGDPPLLKFKAPIEEMEEK). C564 carries the S-palmitoyl cysteine lipid modification. C565 bears the Cysteine methyl ester mark. Residue C565 is the site of S-farnesyl cysteine attachment. The propeptide at 566–568 (RIS) is removed in mature form.

As to quaternary structure, interacts with PPP1CA, PPP1CB and MSN. Interacts (via its fourth ankyrin repeat) with the mature dimeric form of RPSA/LAMR1. Interacts with EEF1A1. Interacts with PTEN. Interacts with ECE1. Post-translationally, phosphorylated by PKA and, after PKA priming, by GSK3B. Phosphorylation by GSK3B reduces its association with PP1C and enhances PP1C activity. Dephosphorylation by its associated PP1C results in enhanced association with PP1C, but reduced PP1C activity.

The protein localises to the cell membrane. It is found in the nucleus. It localises to the cell projection. Its function is as follows. Regulator of protein phosphatase 1 (PP1) that acts as a positive regulator of pulmonary endothelial cell (EC) barrier function. Protects the endothelial barrier from lipopolysaccharide (LPS)-induced vascular leakage. Involved in the regulation of the PI3K/AKT signaling pathway. Involved in the regulation of angiogenesis and endothelial cell proliferation through the control of ECE1 dephosphorylation, trafficking and activity. Involved in the regulation of endothelial cell filopodia extension. May be a downstream target for TGF-beta1 signaling cascade in endothelial cells. Involved in PKA-mediated moesin dephosphorylation which is important in EC barrier protection against thrombin stimulation. Promotes the interaction of PPP1CA with RPSA/LAMR1 and in turn facilitates the dephosphorylation of RPSA/LAMR1. Involved in the dephosphorylation of EEF1A1. The protein is Protein phosphatase 1 regulatory inhibitor subunit 16B (PPP1R16B) of Bos taurus (Bovine).